The sequence spans 232 residues: 5'-methylthioadenosine/S-adenosylhomocysteine nucleosidase (232 aa).

Residue glutamate 12 is the Proton acceptor of the active site. Substrate-binding positions include glycine 78, isoleucine 152, and 173–174 (ME). Catalysis depends on aspartate 197, which acts as the Proton donor.

The protein belongs to the PNP/UDP phosphorylase family. MtnN subfamily. As to quaternary structure, homodimer.

The catalysed reaction is S-adenosyl-L-homocysteine + H2O = S-(5-deoxy-D-ribos-5-yl)-L-homocysteine + adenine. The enzyme catalyses S-methyl-5'-thioadenosine + H2O = 5-(methylsulfanyl)-D-ribose + adenine. It carries out the reaction 5'-deoxyadenosine + H2O = 5-deoxy-D-ribose + adenine. It participates in amino-acid biosynthesis; L-methionine biosynthesis via salvage pathway; S-methyl-5-thio-alpha-D-ribose 1-phosphate from S-methyl-5'-thioadenosine (hydrolase route): step 1/2. Its function is as follows. Catalyzes the irreversible cleavage of the glycosidic bond in both 5'-methylthioadenosine (MTA) and S-adenosylhomocysteine (SAH/AdoHcy) to adenine and the corresponding thioribose, 5'-methylthioribose and S-ribosylhomocysteine, respectively. Also cleaves 5'-deoxyadenosine, a toxic by-product of radical S-adenosylmethionine (SAM) enzymes, into 5-deoxyribose and adenine. Thus, is required for in vivo function of the radical SAM enzymes biotin synthase and lipoic acid synthase, that are inhibited by 5'-deoxyadenosine accumulation. The polypeptide is 5'-methylthioadenosine/S-adenosylhomocysteine nucleosidase (Salmonella enteritidis PT4 (strain P125109)).